Here is a 78-residue protein sequence, read N- to C-terminus: Large ribosomal subunit protein bL28 (78 aa).

Residues 1 to 22 form a disordered region; that stretch reads MAKVCQVTGKRPVTGHNVSHAK.

Belongs to the bacterial ribosomal protein bL28 family.

The sequence is that of Large ribosomal subunit protein bL28 from Saccharophagus degradans (strain 2-40 / ATCC 43961 / DSM 17024).